A 99-amino-acid polypeptide reads, in one-letter code: NADH-quinone oxidoreductase subunit K (99 aa).

The next 3 helical transmembrane spans lie at 3–23, 28–48, and 59–79; these read LVNY…TVLV, IIMF…FVAF, and VVAF…LAII.

Belongs to the complex I subunit 4L family. As to quaternary structure, NDH-1 is composed of 14 different subunits. Subunits NuoA, H, J, K, L, M, N constitute the membrane sector of the complex.

It is found in the cell membrane. The enzyme catalyses a quinone + NADH + 5 H(+)(in) = a quinol + NAD(+) + 4 H(+)(out). Functionally, NDH-1 shuttles electrons from NADH, via FMN and iron-sulfur (Fe-S) centers, to quinones in the respiratory chain. The immediate electron acceptor for the enzyme in this species is believed to be a menaquinone. Couples the redox reaction to proton translocation (for every two electrons transferred, four hydrogen ions are translocated across the cytoplasmic membrane), and thus conserves the redox energy in a proton gradient. This is NADH-quinone oxidoreductase subunit K from Beutenbergia cavernae (strain ATCC BAA-8 / DSM 12333 / CCUG 43141 / JCM 11478 / NBRC 16432 / NCIMB 13614 / HKI 0122).